We begin with the raw amino-acid sequence, 507 residues long: WD-40 repeat-containing protein MSI4 (507 aa).

Position 1 is an N-acetylmethionine (M1). The interval 1–66 (MESDEAAAVS…KTQQSPSVDE (66 aa)) is disordered. WD repeat units lie at residues 95–137 (RWGP…KPRV), 162–202 (IHPG…NRHA), and 217–257 (GHQD…TTIG). The span at 258–272 (TDSKSSGSIIKQTGE) shows a compositional bias: polar residues. The disordered stretch occupies residues 258-282 (TDSKSSGSIIKQTGEGTDKNESPTV). WD repeat units lie at residues 290–330 (GHED…NPVT), 335–375 (AHDA…ANGV), 384–424 (GHKA…KKSD), and 439–486 (GHRD…YRPE). The short motif at 308–323 (FCSVGDDSCLILWDAR) is the DWD box element.

The protein belongs to the WD repeat RBAP46/RBAP48/MSI1 family. In terms of assembly, interacts with AHL16 and HOS1. Interacts with LHP1, PDP1, PDP2 and PDP3. Component of the PRC2 (polycomb repressive complex 2) complex which regulates histone methylation on histone H3K27. Expressed in rosette leaves, cauline leaves, main stems and developing fruits. Expressed at higher levels in roots and flowers.

It localises to the nucleus. Its function is as follows. Core histone-binding subunit that may target chromatin assembly factors, chromatin remodeling factors and histone deacetylases to their histone substrates in a manner that is regulated by nucleosomal DNA. Component of the flowering autonomous pathway which positively regulates flowering by promoting transcriptional repression of the flowering repressor FLC. May promote histone deacetylation at the FLC locus leading to the formation of repressive chromatin structures. Forms a histone deacetylase complex with HDA5, HDA6 and FLD that represses FLC gene expression to control flowering time. Also negatively regulates cold-responsive genes. Acts together with PDP1 and MSI5 to regulate the function of the PRC2 complex on FLC. Required for systemic acquired resistance (SAR) toward pathogenic bacteria (e.g. Pseudomonas syringae pv tomato DC3000 (avrPto)). Together with FLD and MSI4/FVE, contributes to dehydroabietinal-dependent (DA, a diterpenoid tricyclic diterpene) activation of flowering ans SAR. The chain is WD-40 repeat-containing protein MSI4 from Arabidopsis thaliana (Mouse-ear cress).